The sequence spans 681 residues: Proline-rich receptor-like protein kinase PERK8 (681 aa).

Over residues 1–11 the composition is skewed to pro residues; that stretch reads MSLVPPLPILS. The interval 1 to 231 is disordered; the sequence is MSLVPPLPIL…TLPSSSPGKS (231 aa). At 1–237 the chain is on the extracellular side; sequence MSLVPPLPIL…PGKSEVGTGG (237 aa). N-linked (GlcNAc...) asparagine glycosylation is present at asparagine 16. A compositionally biased stretch (pro residues) spans 21–163; that stretch reads APPPLQTQPT…SPPKPSPSTP (143 aa). Low complexity predominate over residues 177 to 191; the sequence is TSASPPSSNPTDPST. Positions 192-201 are enriched in pro residues; the sequence is LAPPPTPLPV. The segment covering 214-229 has biased composition (polar residues); that stretch reads PASNNGNNTLPSSSPG. N-linked (GlcNAc...) asparagine glycosylation occurs at asparagine 220. Residues 238 to 258 traverse the membrane as a helical segment; the sequence is IVAIGVIVGLVFLSLFVMGVW. Residues 259-681 lie on the Cytoplasmic side of the membrane; the sequence is FTRKRKRKDP…GSRDQSRFVP (423 aa). A Protein kinase domain is found at 339–617; it reads FSEKNLLGEG…SQVVRALDTL (279 aa). ATP-binding positions include 345–353 and lysine 367; that span reads LGEGGFGCV. Tyrosine 412 bears the Phosphotyrosine mark. The active-site Proton acceptor is aspartate 463. Phosphoserine occurs at positions 467 and 498. Residues threonine 499 and threonine 504 each carry the phosphothreonine modification. Tyrosine 512 is subject to Phosphotyrosine.

The protein belongs to the protein kinase superfamily. Ser/Thr protein kinase family. In terms of assembly, interacts with KIPK1 and KIPK2 (via its cytosolic domain). As to expression, mostly expressed in seedlings, roots, inflorescence bolts and flower buds.

The protein localises to the cell membrane. The catalysed reaction is L-seryl-[protein] + ATP = O-phospho-L-seryl-[protein] + ADP + H(+). It carries out the reaction L-threonyl-[protein] + ATP = O-phospho-L-threonyl-[protein] + ADP + H(+). In terms of biological role, could be involved in the negative regulation of root growth. This is Proline-rich receptor-like protein kinase PERK8 (PERK8) from Arabidopsis thaliana (Mouse-ear cress).